The primary structure comprises 872 residues: DNA mismatch repair protein MutS (872 aa).

622 to 629 (GPNMAGKS) is an ATP binding site.

It belongs to the DNA mismatch repair MutS family.

Its function is as follows. This protein is involved in the repair of mismatches in DNA. It is possible that it carries out the mismatch recognition step. This protein has a weak ATPase activity. The protein is DNA mismatch repair protein MutS of Geobacter metallireducens (strain ATCC 53774 / DSM 7210 / GS-15).